Reading from the N-terminus, the 152-residue chain is Aminoglycoside N(6')-acetyltransferase type 1 (152 aa).

The 148-residue stretch at 5-152 folds into the N-acetyltransferase domain; it reads PLVRPVETTD…AQVRCFRKPL (148 aa). Residues tryptophan 26, tyrosine 73, glutamate 86, and aspartate 122 each coordinate substrate. Residue asparagine 127 coordinates acetyl-CoA.

Homodimer.

It carries out the reaction kanamycin B + acetyl-CoA = N(6')-acetylkanamycin B + CoA + H(+). Functionally, catalyzes the transfer of an acetyl group from acetyl-CoA to the 6'-amino group of aminoglycoside molecules conferring resistance to antibiotics containing the purpurosamine ring including amikacin. The chain is Aminoglycoside N(6')-acetyltransferase type 1 (aacA7) from Klebsiella aerogenes (Enterobacter aerogenes).